The chain runs to 1360 residues: DNA-directed RNA polymerase subunit beta (1360 aa).

Belongs to the RNA polymerase beta chain family. In terms of assembly, the RNAP catalytic core consists of 2 alpha, 1 beta, 1 beta' and 1 omega subunit. When a sigma factor is associated with the core the holoenzyme is formed, which can initiate transcription.

The enzyme catalyses RNA(n) + a ribonucleoside 5'-triphosphate = RNA(n+1) + diphosphate. Functionally, DNA-dependent RNA polymerase catalyzes the transcription of DNA into RNA using the four ribonucleoside triphosphates as substrates. The sequence is that of DNA-directed RNA polymerase subunit beta from Caulobacter sp. (strain K31).